The chain runs to 478 residues: Zinc metalloproteinase/disintegrin ussurin (478 aa).

The N-terminal stretch at 1 to 20 (MIQVLLVTICLAAFPYQGSS) is a signal peptide. A propeptide spanning residues 21-190 (IILESGNVND…KKASPLVVTT (170 aa)) is cleaved from the precursor. The Peptidase M12B domain maps to 193–389 (RYVELVVVAD…RNPQCILNKP (197 aa)). Positions 196 and 280 each coordinate Ca(2+). Cystine bridges form between Cys304-Cys384, Cys344-Cys368, and Cys346-Cys351. His329 provides a ligand contact to Zn(2+). Glu330 is a catalytic residue. His333 and His339 together coordinate Zn(2+). Residues Cys384 and Asn387 each coordinate Ca(2+). Residues 390–413 (LRTDIVSTPVSGNELLEAGEECDC) constitute a propeptide that is removed on maturation. Residues 397–478 (TPVSGNELLE…AGCPRNPFHA (82 aa)) form the Disintegrin domain. Cystine bridges form between Cys411–Cys426, Cys413–Cys421, Cys420–Cys443, Cys434–Cys440, Cys439–Cys464, and Cys452–Cys471. A Cell attachment site motif is present at residues 456 to 458 (RGD).

Belongs to the venom metalloproteinase (M12B) family. P-II subfamily. P-IIa sub-subfamily. As to quaternary structure, monomer. Zn(2+) is required as a cofactor. As to expression, expressed by the venom gland.

The protein localises to the secreted. Impairs hemostasis in the envenomed animal. Functionally, inhibits platelet aggregation induced by ADP, thrombin, platelet-activating factor and collagen. Acts by inhibiting fibrinogen interaction with platelet receptors GPIIb/GPIIIa (ITGA2B/ITGB3). The protein is Zinc metalloproteinase/disintegrin ussurin of Gloydius ussuriensis (Ussuri mamushi).